The sequence spans 238 residues: Lactate utilization protein A (238 aa).

Belongs to the LutA/YkgE family.

In terms of biological role, is involved in L-lactate degradation and allows cells to grow with lactate as the sole carbon source. The chain is Lactate utilization protein A from Anoxybacillus flavithermus (strain DSM 21510 / WK1).